Here is a 357-residue protein sequence, read N- to C-terminus: Poly(3-hydroxyalkanoate) polymerase subunit PhaE (357 aa).

Positions 320–357 (AALAGEEPATKPATALRSPAPAAKAPARRRTTKTNPAD) are disordered. A compositionally biased stretch (low complexity) spans 331–344 (PATALRSPAPAAKA).

It belongs to the PHA/PHB synthase family. Type III PhaE subfamily. In terms of assembly, a large complex of PhaC and PhaE; the ratio of the subunits has been estimated to be from 1:1 to 4:1, with more PhaE than PhaC.

It is found in the cytoplasm. It participates in biopolymer metabolism; poly-(R)-3-hydroxybutanoate biosynthesis. Functionally, polymerizes D(-)-3-hydroxybutyryl-CoA to create polyhydroxybutyrate (PHB) which consists of thousands of hydroxybutyrate molecules linked end to end. This subunit has no catalytic activity but enhances the activity of PhaC, the catalytic subunit, 100-fold. The protein is Poly(3-hydroxyalkanoate) polymerase subunit PhaE of Allochromatium vinosum (strain ATCC 17899 / DSM 180 / NBRC 103801 / NCIMB 10441 / D) (Chromatium vinosum).